Reading from the N-terminus, the 479-residue chain is Altronate oxidoreductase (479 aa).

18-29 (IIQFGEGNFLRA) contributes to the NAD(+) binding site.

This sequence belongs to the mannitol dehydrogenase family. UxaB subfamily.

The enzyme catalyses D-altronate + NAD(+) = keto-D-tagaturonate + NADH + H(+). It functions in the pathway carbohydrate metabolism; pentose and glucuronate interconversion. This is Altronate oxidoreductase from Bacteroides thetaiotaomicron (strain ATCC 29148 / DSM 2079 / JCM 5827 / CCUG 10774 / NCTC 10582 / VPI-5482 / E50).